The following is a 240-amino-acid chain: Sugar fermentation stimulation protein homolog (240 aa).

It belongs to the SfsA family.

In Crocosphaera subtropica (strain ATCC 51142 / BH68) (Cyanothece sp. (strain ATCC 51142)), this protein is Sugar fermentation stimulation protein homolog.